A 331-amino-acid polypeptide reads, in one-letter code: MTGIPFGHHQSLAQVLRSYSQLVKPKIIALLLMTTAGAMWMAGNTDPFKFGVTLLGGGMAAAAANVINMVYDADIDRMMERTRHRPLPSGRIRARHALRFAGILAVMSFGLLACFTNLLAASLAMAGILVYVGVYTHWLKRSSPQNIVIGGAAGAIPPLVGWAAATGELSWAAWVMFALIFLWTPPHFWALAILKREDYARAGVPMLPVVAGERPTAAQILLYALLLVPVSLLLVYPLHVLGSFYLSAATLLGSLLIWKAVQLLQEPHSRERATSLFTFANLYLLLLCGAMGLDRWSLTHTLWDQALASLQGVYASLGALANHLGAMGSLG.

9 consecutive transmembrane segments (helical) span residues 22-42, 50-70, 100-120, 147-167, 174-194, 220-240, 241-261, 273-293, and 307-327; these read LVKP…MWMA, FGVT…INMV, FAGI…NLLA, IVIG…AATG, WVMF…LAIL, ILLY…PLHV, LGSF…WKAV, ATSL…AMGL, and LASL…LGAM.

Belongs to the UbiA prenyltransferase family. Protoheme IX farnesyltransferase subfamily.

The protein resides in the cell inner membrane. The enzyme catalyses heme b + (2E,6E)-farnesyl diphosphate + H2O = Fe(II)-heme o + diphosphate. Its pathway is porphyrin-containing compound metabolism; heme O biosynthesis; heme O from protoheme: step 1/1. Its function is as follows. Converts heme B (protoheme IX) to heme O by substitution of the vinyl group on carbon 2 of heme B porphyrin ring with a hydroxyethyl farnesyl side group. The polypeptide is Protoheme IX farnesyltransferase (Synechococcus sp. (strain JA-3-3Ab) (Cyanobacteria bacterium Yellowstone A-Prime)).